A 418-amino-acid polypeptide reads, in one-letter code: Probable carboxypeptidase AFLA_000940 (418 aa).

The signal sequence occupies residues 1–18; that stretch reads MKATDLFHVTVLVAGALA. Asn-74 is a glycosylation site (N-linked (GlcNAc...) asparagine). Asp-147 contributes to the Zn(2+) binding site. Residue Asn-168 is glycosylated (N-linked (GlcNAc...) asparagine). Residue Glu-179 is the Proton acceptor of the active site. Glu-180 contacts Zn(2+).

The protein belongs to the peptidase M20A family. Zn(2+) serves as cofactor.

The protein localises to the secreted. In Aspergillus flavus (strain ATCC 200026 / FGSC A1120 / IAM 13836 / NRRL 3357 / JCM 12722 / SRRC 167), this protein is Probable carboxypeptidase AFLA_000940.